Consider the following 508-residue polypeptide: Maturase K (508 aa).

Belongs to the intron maturase 2 family. MatK subfamily.

The protein resides in the plastid. It localises to the chloroplast. In terms of biological role, usually encoded in the trnK tRNA gene intron. Probably assists in splicing its own and other chloroplast group II introns. This Pelargonium hortorum (Common geranium) protein is Maturase K.